The following is a 714-amino-acid chain: Polyribonucleotide nucleotidyltransferase (714 aa).

Mg(2+) contacts are provided by Asp-493 and Asp-499. The 60-residue stretch at 559–618 (PRIETTKIPADRIGELIGPGGKNIKAIQAESGADINIEEDGTVHIYAAKQEGLDRALELV) folds into the KH domain. The S1 motif domain occupies 628 to 696 (GELYTGKIVS…DKGRVKMSIR (69 aa)).

This sequence belongs to the polyribonucleotide nucleotidyltransferase family. Mg(2+) serves as cofactor.

It is found in the cytoplasm. It carries out the reaction RNA(n+1) + phosphate = RNA(n) + a ribonucleoside 5'-diphosphate. Involved in mRNA degradation. Catalyzes the phosphorolysis of single-stranded polyribonucleotides processively in the 3'- to 5'-direction. The protein is Polyribonucleotide nucleotidyltransferase of Akkermansia muciniphila (strain ATCC BAA-835 / DSM 22959 / JCM 33894 / BCRC 81048 / CCUG 64013 / CIP 107961 / Muc).